Reading from the N-terminus, the 290-residue chain is L-cysteine S-thiosulfotransferase subunit SoxA (290 aa).

Positions 1–26 (MPRFTKTKGTLAATALGLALAGAAFA) are cleaved as a signal peptide. Asp78 and Asp81 together coordinate Zn(2+). One can recognise a Cytochrome c domain in the interval 78–171 (DDFDNPAMVF…DMLSLISLQS (94 aa)). 4 residues coordinate heme c: Cys106, Cys109, His110, and Cys143. His190 contacts Zn(2+). Residues Cys206, Cys209, and His210 each coordinate heme c. Arg247 is a substrate binding site. Cys251 contributes to the heme c binding site. Residue Cys251 is the Cysteine persulfide intermediate of the active site. Residue Asp266 participates in Zn(2+) binding.

Belongs to the SoxA family. In terms of assembly, heterodimer of SoxA and SoxX. Heme c serves as cofactor. The cofactor is Zn(2+). Post-translationally, cysteine persulfide at Cys-251.

It localises to the periplasm. The catalysed reaction is L-cysteinyl-[SoxY protein] + thiosulfate + 2 Fe(III)-[cytochrome c] = S-sulfosulfanyl-L-cysteinyl-[SoxY protein] + 2 Fe(II)-[cytochrome c] + 2 H(+). The enzyme catalyses S-sulfanyl-L-cysteinyl-[SoxY protein] + thiosulfate + 2 Fe(III)-[cytochrome c] = S-(2-sulfodisulfanyl)-L-cysteinyl-[SoxY protein] + 2 Fe(II)-[cytochrome c] + 2 H(+). Functionally, C-type diheme cytochrome, which is part of the SoxAX cytochrome complex involved in sulfur oxidation. The SoxAX complex catalyzes the formation of a heterodisulfide bond between the conserved cysteine residue on a sulfur carrier SoxYZ complex subunit SoxY and thiosulfate or other inorganic sulfur substrates. This leads to the liberation of two electrons, which may be transferred from the SoxAX complex to another cytochrome c that then channels them into the respiratory electron transport chain. Some electrons may be used for reductive CO(2) fixation. In Paracoccus pantotrophus (Thiosphaera pantotropha), this protein is L-cysteine S-thiosulfotransferase subunit SoxA.